The primary structure comprises 288 residues: S-methyl-5'-thioadenosine phosphorylase (288 aa).

Phosphate contacts are provided by residues S10, 52–53 (RH), and 85–86 (TA). A substrate-binding site is contributed by M188. T189 lines the phosphate pocket. Residue 212-214 (DYD) participates in substrate binding.

The protein belongs to the PNP/MTAP phosphorylase family. MTAP subfamily. Homotrimer.

It localises to the cytoplasm. Its subcellular location is the nucleus. The enzyme catalyses S-methyl-5'-thioadenosine + phosphate = 5-(methylsulfanyl)-alpha-D-ribose 1-phosphate + adenine. The protein operates within amino-acid biosynthesis; L-methionine biosynthesis via salvage pathway; S-methyl-5-thio-alpha-D-ribose 1-phosphate from S-methyl-5'-thioadenosine (phosphorylase route): step 1/1. Its function is as follows. Catalyzes the reversible phosphorylation of S-methyl-5'-thioadenosine (MTA) to adenine and 5-methylthioribose-1-phosphate. Involved in the breakdown of MTA, a major by-product of polyamine biosynthesis. Responsible for the first step in the methionine salvage pathway after MTA has been generated from S-adenosylmethionine. Has broad substrate specificity with 6-aminopurine nucleosides as preferred substrates. The protein is S-methyl-5'-thioadenosine phosphorylase of Caenorhabditis elegans.